The following is a 549-amino-acid chain: Lipase 4 (549 aa).

Positions 1 to 15 (MKLALVLSLIVSVAA) are cleaved as a signal peptide. A disulfide bond links Cys75 and Cys112. The active-site Acyl-ester intermediate is the Ser224. Residues Cys283 and Cys292 are joined by a disulfide bond. Glu356 acts as the Charge relay system in catalysis. The N-linked (GlcNAc...) asparagine glycan is linked to Asn366. His464 (charge relay system) is an active-site residue.

This sequence belongs to the type-B carboxylesterase/lipase family.

It carries out the reaction a triacylglycerol + H2O = a diacylglycerol + a fatty acid + H(+). This is Lipase 4 (LIP4) from Diutina rugosa (Yeast).